The primary structure comprises 554 residues: CTP synthase (554 aa).

An amidoligase domain region spans residues 1–270 (MTKFVFVTGG…DGLICDKLRL (270 aa)). Position 13 (serine 13) interacts with CTP. UTP is bound at residue serine 13. ATP-binding positions include 14–19 (SLGKGI) and aspartate 71. Residues aspartate 71 and glutamate 144 each coordinate Mg(2+). CTP is bound by residues 151-153 (DIE), 191-196 (KTKPTQ), and lysine 227. Residues 191–196 (KTKPTQ) and lysine 227 contribute to the UTP site. Positions 295-548 (TVAMVGKYVD…IAAAKARHQA (254 aa)) constitute a Glutamine amidotransferase type-1 domain. Glycine 357 lines the L-glutamine pocket. Cysteine 384 acts as the Nucleophile; for glutamine hydrolysis in catalysis. Residues 385–388 (LGMQ), glutamate 408, and arginine 474 contribute to the L-glutamine site. Residues histidine 521 and glutamate 523 contribute to the active site.

It belongs to the CTP synthase family. As to quaternary structure, homotetramer.

The catalysed reaction is UTP + L-glutamine + ATP + H2O = CTP + L-glutamate + ADP + phosphate + 2 H(+). It carries out the reaction L-glutamine + H2O = L-glutamate + NH4(+). The enzyme catalyses UTP + NH4(+) + ATP = CTP + ADP + phosphate + 2 H(+). It participates in pyrimidine metabolism; CTP biosynthesis via de novo pathway; CTP from UDP: step 2/2. Its activity is regulated as follows. Allosterically activated by GTP, when glutamine is the substrate; GTP has no effect on the reaction when ammonia is the substrate. The allosteric effector GTP functions by stabilizing the protein conformation that binds the tetrahedral intermediate(s) formed during glutamine hydrolysis. Inhibited by the product CTP, via allosteric rather than competitive inhibition. Functionally, catalyzes the ATP-dependent amination of UTP to CTP with either L-glutamine or ammonia as the source of nitrogen. Regulates intracellular CTP levels through interactions with the four ribonucleotide triphosphates. The chain is CTP synthase from Verminephrobacter eiseniae (strain EF01-2).